We begin with the raw amino-acid sequence, 1056 residues long: Contactin-5 (1056 aa).

Positions 1–14 (MKADSSSSSSMSSR) are enriched in low complexity. The disordered stretch occupies residues 1–33 (MKADSSSSSSMSSRMRLRNSHGVGSSSQDWSPF). Over residues 22 to 31 (GVGSSSQDWS) the composition is skewed to polar residues. Ig-like C2-type domains follow at residues 57-142 (PVFI…IVLS), 154-240 (PFSG…RVLS), 258-343 (PKIE…GHLQ), 348-432 (PQWI…AELK), 438-519 (PMFN…AELT), and 527-622 (PMRV…AELL). 3 cysteine pairs are disulfide-bonded: Cys81–Cys131, Cys175–Cys227, and Cys280–Cys327. Residues Asn96 and Asn119 are each glycosylated (N-linked (GlcNAc...) asparagine). N-linked (GlcNAc...) asparagine glycosylation occurs at Asn355. 3 disulfides stabilise this stretch: Cys369–Cys416, Cys459–Cys507, and Cys549–Cys606. 2 N-linked (GlcNAc...) asparagine glycosylation sites follow: Asn489 and Asn496. Fibronectin type-III domains are found at residues 629–727 (PPGV…TKEA), 732–829 (APAN…SAEG), 834–928 (PPSE…TKKN), and 933–1023 (PPGN…TSSG). Residues 711 to 736 (GTGDPSPPSRAVRTKEAVPSVAPANV) form a disordered region. N-linked (GlcNAc...) asparagine glycans are attached at residues Asn772, Asn887, Asn945, and Asn958. Asn1035 carries the GPI-anchor amidated asparagine lipid modification. A propeptide spans 1036–1056 (SPPGLAWTALFLSLMVPSFPL) (removed in mature form).

This sequence belongs to the immunoglobulin superfamily. Contactin family.

The protein localises to the cell membrane. In terms of biological role, contactins mediate cell surface interactions during nervous system development. This is Contactin-5 (cntn5) from Danio rerio (Zebrafish).